The following is an 82-amino-acid chain: MAAGSTGERPFFEIITSIRYWVIHFVTLPSIFLAGFLFVSTGLAYDAFGTPRPDAYFQASESKAPVVSQRYEGKSELDVRLK.

A helical transmembrane segment spans residues 22 to 36 (VIHFVTLPSIFLAGF). Histidine 24 is a heme binding site.

The protein belongs to the PsbE/PsbF family. As to quaternary structure, heterodimer of an alpha subunit and a beta subunit. PSII is composed of 1 copy each of membrane proteins PsbA, PsbB, PsbC, PsbD, PsbE, PsbF, PsbH, PsbI, PsbJ, PsbK, PsbL, PsbM, PsbT, PsbX, PsbY, PsbZ, Psb30/Ycf12, peripheral proteins PsbO, CyanoQ (PsbQ), PsbU, PsbV and a large number of cofactors. It forms dimeric complexes. Heme b serves as cofactor.

It is found in the cellular thylakoid membrane. Functionally, this b-type cytochrome is tightly associated with the reaction center of photosystem II (PSII). PSII is a light-driven water:plastoquinone oxidoreductase that uses light energy to abstract electrons from H(2)O, generating O(2) and a proton gradient subsequently used for ATP formation. It consists of a core antenna complex that captures photons, and an electron transfer chain that converts photonic excitation into a charge separation. This Parasynechococcus marenigrum (strain WH8102) protein is Cytochrome b559 subunit alpha.